The primary structure comprises 257 residues: Ribosome-associated protein quality control protein P2 (257 aa).

Positions 1–74 are N-terminal domain; that stretch reads MSDIYQHFRK…RAERKRAILF (74 aa). A central region region spans residues 87–166; the sequence is LQAFNVRYAD…EKIDLSDLNI (80 aa). An S4 RNA-binding domain is found at 181-251; the sequence is LRLDAVCASM…GKTKKDKWRV (71 aa).

In the presence of chloramphenicol (a translation elongation inhibitor), but not erythromycin or lincomycin, associates with 50S ribosomal subunits with or without a tRNA in the P-site. The S4 domain binds in a similar position to RqcP.

It is found in the cytoplasm. Its function is as follows. Part of the ribosome quality control system (RQC), a ribosome-associated complex that mediates the extraction of incompletely synthesized nascent chains from stalled ribosomes and their subsequent degradation. RqcH recruits Ala-charged tRNA, and with RqcP directs the elongation of stalled nascent chains on 50S ribosomal subunits, leading to non-templated C-terminal alanine extensions (Ala tail). The Ala tail promotes nascent chain degradation. RqcP2 (YlmH) overexpression can compensate for RqcP's role in Ala tailing during RQC, restoring Ala tail addition to peptides in stalled ribosomes. Overexpression complements a double ssrA-rqcP double deletion, but not an ssrA-rqcH double deletion. Functionally, the majority of tagged protein is associated with tRNA-less 50S subunits, suggesting it might also play a role in late stage 50S subunit biogenesis. This is Ribosome-associated protein quality control protein P2 from Bacillus subtilis (strain 168).